Consider the following 105-residue polypeptide: UPF0145 protein VP1283 (105 aa).

Belongs to the UPF0145 family.

In Vibrio parahaemolyticus serotype O3:K6 (strain RIMD 2210633), this protein is UPF0145 protein VP1283.